We begin with the raw amino-acid sequence, 177 residues long: MEICRGLRSHLITLLLFLFHSETICRPSGRKSSKMQAFRIWDVNQKTFYLRNNQLVAGYLQGPNVNLEEKIDVVPIEPHALFLGIHGGKMCLSCVKSGDETRLQLEAVNITDLSENRKQDKRFAFIRSDSGPTTSFESAACPGWFLCTAMEADQPVSLTNMPDEGVMVTKFYFQEDE.

The N-terminal stretch at 1 to 25 is a signal peptide; that stretch reads MEICRGLRSHLITLLLFLFHSETIC. A disulfide bridge connects residues C91 and C141. The N-linked (GlcNAc...) asparagine glycan is linked to N109.

Belongs to the IL-1 family. In terms of tissue distribution, the intracellular form of IL1RN is predominantly expressed in epithelial cells.

It localises to the secreted. It is found in the cytoplasm. In terms of biological role, anti-inflammatory antagonist of interleukin-1 family of proinflammatory cytokines such as interleukin-1beta/IL1B and interleukin-1alpha/IL1A. Protects from immune dysregulation and uncontrolled systemic inflammation triggered by IL1 for a range of innate stimulatory agents such as pathogens. The sequence is that of Interleukin-1 receptor antagonist protein (IL1RN) from Homo sapiens (Human).